Consider the following 231-residue polypeptide: Sugar fermentation stimulation protein homolog (231 aa).

The protein belongs to the SfsA family.

In Citrifermentans bemidjiense (strain ATCC BAA-1014 / DSM 16622 / JCM 12645 / Bem) (Geobacter bemidjiensis), this protein is Sugar fermentation stimulation protein homolog.